The chain runs to 227 residues: UPF0173 metal-dependent hydrolase BCE_4747 (227 aa).

The protein belongs to the UPF0173 family.

The polypeptide is UPF0173 metal-dependent hydrolase BCE_4747 (Bacillus cereus (strain ATCC 10987 / NRS 248)).